Reading from the N-terminus, the 47-residue chain is Sperm protamine P1 (47 aa).

It belongs to the protamine P1 family. As to expression, testis.

The protein resides in the nucleus. The protein localises to the chromosome. Functionally, protamines substitute for histones in the chromatin of sperm during the haploid phase of spermatogenesis. They compact sperm DNA into a highly condensed, stable and inactive complex. This chain is Sperm protamine P1 (PRM1), found in Galeopterus variegatus (Malayan flying lemur).